We begin with the raw amino-acid sequence, 304 residues long: Pyridoxal 5'-phosphate synthase subunit pyroA (304 aa).

Aspartate 28 provides a ligand contact to D-ribose 5-phosphate. The active-site Schiff-base intermediate with D-ribose 5-phosphate is the lysine 85. Glycine 157 serves as a coordination point for D-ribose 5-phosphate. Residue arginine 169 participates in D-glyceraldehyde 3-phosphate binding. Residues glycine 224 and 245 to 246 (GS) each bind D-ribose 5-phosphate.

Belongs to the PdxS/SNZ family.

The enzyme catalyses aldehydo-D-ribose 5-phosphate + D-glyceraldehyde 3-phosphate + L-glutamine = pyridoxal 5'-phosphate + L-glutamate + phosphate + 3 H2O + H(+). It functions in the pathway cofactor biosynthesis; pyridoxal 5'-phosphate biosynthesis. Its function is as follows. Catalyzes the formation of pyridoxal 5'-phosphate from ribose 5-phosphate (RBP), glyceraldehyde 3-phosphate (G3P) and ammonia. The ammonia is provided by PDX2. Can also use ribulose 5-phosphate and dihydroxyacetone phosphate as substrates, resulting from enzyme-catalyzed isomerization of RBP and G3P, respectively. Also plays an indirect role in resistance to singlet oxygen-generating photosensitizers. The protein is Pyridoxal 5'-phosphate synthase subunit pyroA (pyroA) of Emericella nidulans (strain FGSC A4 / ATCC 38163 / CBS 112.46 / NRRL 194 / M139) (Aspergillus nidulans).